A 242-amino-acid chain; its full sequence is Uridylate kinase (242 aa).

ATP is bound at residue 15–18 (KLSG). Gly57 is a UMP binding site. Positions 58 and 62 each coordinate ATP. Residues Asp78 and 139 to 146 (TGNPFFTT) each bind UMP. Residues Thr166, Tyr172, and Asp175 each contribute to the ATP site.

This sequence belongs to the UMP kinase family. Homohexamer.

It is found in the cytoplasm. It carries out the reaction UMP + ATP = UDP + ADP. Its pathway is pyrimidine metabolism; CTP biosynthesis via de novo pathway; UDP from UMP (UMPK route): step 1/1. Its activity is regulated as follows. Inhibited by UTP. Its function is as follows. Catalyzes the reversible phosphorylation of UMP to UDP. In Acinetobacter baumannii (strain ATCC 17978 / DSM 105126 / CIP 53.77 / LMG 1025 / NCDC KC755 / 5377), this protein is Uridylate kinase.